Consider the following 608-residue polypeptide: Microtubule-associated protein VP7 (608 aa).

It is found in the virion. Its subcellular location is the host cytoplasm. It localises to the host cytoskeleton. Functionally, minor inner capsid component. Displays NTPase and RNA 5'-triphosphatase (RTPase) activities. May function as a cofactor of polymerase. Associates with microtubules and plays a role in the formation, structural organization and morphology of viral inclusions, where the assembly of cores and the replication of viral RNA occur. In Oryza latifolia (Indian wild rice), this protein is Microtubule-associated protein VP7.